A 52-amino-acid polypeptide reads, in one-letter code: MARYSCCRSHSRSRSRRRRQRCRRRRRRSCGRRRRACYRRYTVRYRRRRRRR.

A disordered region spans residues 1 to 27 (MARYSCCRSHSRSRSRRRRQRCRRRRR). A compositionally biased stretch (basic residues) spans 9–27 (SHSRSRSRRRRQRCRRRRR).

Belongs to the protamine P1 family. As to expression, testis.

It localises to the nucleus. The protein localises to the chromosome. In terms of biological role, protamines substitute for histones in the chromatin of sperm during the haploid phase of spermatogenesis. They compact sperm DNA into a highly condensed, stable and inactive complex. The chain is Sperm protamine P1 (PRM1) from Rhinolophus ferrumequinum (Greater horseshoe bat).